Reading from the N-terminus, the 255-residue chain is NAD kinase (255 aa).

The active-site Proton acceptor is the Asp44. NAD(+) is bound by residues 44–45, His49, 114–115, Asp144, Ala152, 155–160, and Gln216; these read DG, NE, and SAYNLS.

This sequence belongs to the NAD kinase family. A divalent metal cation serves as cofactor.

It localises to the cytoplasm. It carries out the reaction NAD(+) + ATP = ADP + NADP(+) + H(+). Functionally, involved in the regulation of the intracellular balance of NAD and NADP, and is a key enzyme in the biosynthesis of NADP. Catalyzes specifically the phosphorylation on 2'-hydroxyl of the adenosine moiety of NAD to yield NADP. The protein is NAD kinase of Rickettsia peacockii (strain Rustic).